A 218-amino-acid chain; its full sequence is Small ribosomal subunit protein uS3c (218 aa).

The region spanning 47 to 118 (VQKNMRIFSG…KLNIAITRIG (72 aa)) is the KH type-2 domain.

It belongs to the universal ribosomal protein uS3 family. Part of the 30S ribosomal subunit.

The protein localises to the plastid. It is found in the chloroplast. The polypeptide is Small ribosomal subunit protein uS3c (rps3) (Cucumis sativus (Cucumber)).